The following is a 147-amino-acid chain: Hemoglobin subunit gamma-1 (147 aa).

Residue Gly-2 is modified to N-acetylglycine. The Globin domain occupies His-3 to His-147. Phosphothreonine is present on Thr-13. Phosphoserine occurs at positions 45, 51, and 53. Lys-60 is subject to N6-acetyllysine. Position 64 (His-64) interacts with heme b. Lys-83 is modified (N6-acetyllysine). His-93 contacts heme b. Cys-94 carries the post-translational modification S-nitrosocysteine. Position 140 is a phosphoserine (Ser-140).

It belongs to the globin family. Heterotetramer of two alpha chains and two gamma chains in fetal hemoglobin (Hb F). In terms of tissue distribution, red blood cells.

Its function is as follows. Gamma chains make up the fetal hemoglobin F, in combination with alpha chains. The protein is Hemoglobin subunit gamma-1 (HBG1) of Pongo pygmaeus (Bornean orangutan).